The chain runs to 255 residues: tRNA pseudouridine synthase A (255 aa).

D52 functions as the Nucleophile in the catalytic mechanism. Y111 serves as a coordination point for substrate.

Belongs to the tRNA pseudouridine synthase TruA family. Homodimer.

It carries out the reaction uridine(38/39/40) in tRNA = pseudouridine(38/39/40) in tRNA. Formation of pseudouridine at positions 38, 39 and 40 in the anticodon stem and loop of transfer RNAs. The chain is tRNA pseudouridine synthase A from Nitrobacter winogradskyi (strain ATCC 25391 / DSM 10237 / CIP 104748 / NCIMB 11846 / Nb-255).